Reading from the N-terminus, the 104-residue chain is Protein E7 (104 aa).

Positions 1 to 47 are E7 terminal domain; the sequence is MHGDTINIQDVILDLVPQPEIDLQCYEQLDYEQFDSSEEDETDNVRN. The short motif at 23–27 is the LXCXE motif; interaction with host RB1 and TMEM173/STING element; that stretch reads LQCYE. A zinc finger spans residues 65–101; that stretch reads CCVCNSIVQLAVLSSRQNVRAVEQLLMGDVSLVCHQC. The short motif at 83 to 91 is the Nuclear export signal element; sequence VRAVEQLLM.

It belongs to the papillomaviridae E7 protein family. Homodimer. Homooligomer. Interacts with host RB1; this interaction induces dissociation of RB1-E2F1 complex thereby disrupting RB1 activity. Interacts with host EP300; this interaction represses EP300 transcriptional activity. Interacts with protein E2; this interaction inhibits E7 oncogenic activity. Interacts with host TMEM173/STING; this interaction impairs the ability of TMEM173/STING to sense cytosolic DNA and promote the production of type I interferon (IFN-alpha and IFN-beta). Highly phosphorylated.

The protein localises to the host cytoplasm. It localises to the host nucleus. Functionally, plays a role in viral genome replication by driving entry of quiescent cells into the cell cycle. Stimulation of progression from G1 to S phase allows the virus to efficiently use the cellular DNA replicating machinery to achieve viral genome replication. E7 protein has both transforming and trans-activating activities. Induces the disassembly of the E2F1 transcription factor from RB1, with subsequent transcriptional activation of E2F1-regulated S-phase genes. Interferes with host histone deacetylation mediated by HDAC1 and HDAC2, leading to transcription activation. Also plays a role in the inhibition of both antiviral and antiproliferative functions of host interferon alpha. Interaction with host TMEM173/STING impairs the ability of TMEM173/STING to sense cytosolic DNA and promote the production of type I interferon (IFN-alpha and IFN-beta). The protein is Protein E7 of Homo sapiens (Human).